Reading from the N-terminus, the 166-residue chain is D-aminoacyl-tRNA deacylase (166 aa).

The Gly-cisPro motif, important for rejection of L-amino acids signature appears at 142-143; sequence GP.

It belongs to the DTD family. Homodimer.

The protein localises to the cytoplasm. The catalysed reaction is glycyl-tRNA(Ala) + H2O = tRNA(Ala) + glycine + H(+). The enzyme catalyses a D-aminoacyl-tRNA + H2O = a tRNA + a D-alpha-amino acid + H(+). In terms of biological role, an aminoacyl-tRNA editing enzyme that deacylates mischarged D-aminoacyl-tRNAs. Also deacylates mischarged glycyl-tRNA(Ala), protecting cells against glycine mischarging by AlaRS. Acts via tRNA-based rather than protein-based catalysis; rejects L-amino acids rather than detecting D-amino acids in the active site. By recycling D-aminoacyl-tRNA to D-amino acids and free tRNA molecules, this enzyme counteracts the toxicity associated with the formation of D-aminoacyl-tRNA entities in vivo and helps enforce protein L-homochirality. In Ralstonia nicotianae (strain ATCC BAA-1114 / GMI1000) (Ralstonia solanacearum), this protein is D-aminoacyl-tRNA deacylase.